A 185-amino-acid polypeptide reads, in one-letter code: Potassium-transporting ATPase KdpC subunit (185 aa).

A helical membrane pass occupies residues 11 to 31 (LALLMTLVTGALYPLAVTGIA).

It belongs to the KdpC family. In terms of assembly, the system is composed of three essential subunits: KdpA, KdpB and KdpC.

The protein resides in the cell inner membrane. Its function is as follows. Part of the high-affinity ATP-driven potassium transport (or Kdp) system, which catalyzes the hydrolysis of ATP coupled with the electrogenic transport of potassium into the cytoplasm. This subunit acts as a catalytic chaperone that increases the ATP-binding affinity of the ATP-hydrolyzing subunit KdpB by the formation of a transient KdpB/KdpC/ATP ternary complex. This is Potassium-transporting ATPase KdpC subunit from Pseudomonas putida (strain ATCC 47054 / DSM 6125 / CFBP 8728 / NCIMB 11950 / KT2440).